The primary structure comprises 351 residues: 2-Hydroxyacid oxidase 2 (351 aa).

Positions 2-351 (SLVCLTDFQA…NRNLVQFSRL (350 aa)) constitute an FMN hydroxy acid dehydrogenase domain. Residues 77–79 (PTG), Ser-106, and Gln-128 each bind FMN. Tyr-130 serves as a coordination point for a 2-oxocarboxylate. Thr-156 serves as a coordination point for FMN. Position 165 (Arg-165) interacts with a 2-oxocarboxylate. Thr-178 carries the phosphothreonine modification. Lys-222 is a binding site for FMN. His-246 (proton acceptor) is an active-site residue. Arg-249 provides a ligand contact to a 2-oxocarboxylate. Residues 277 to 281 (DGGVR) and 300 to 301 (GR) contribute to the FMN site. Residues 349-351 (SRL) carry the Microbody targeting signal motif.

Belongs to the FMN-dependent alpha-hydroxy acid dehydrogenase family. As to quaternary structure, homotetramer. The cofactor is FMN. Expressed in the liver and kidney.

The protein localises to the peroxisome. It catalyses the reaction a (2S)-2-hydroxycarboxylate + O2 = a 2-oxocarboxylate + H2O2. The enzyme catalyses 2-hydroxyhexadecanoate + O2 = 2-oxohexadecanoate + H2O2. It carries out the reaction 2-hydroxyoctanoate + O2 = 2-oxooctanoate + H2O2. The protein operates within lipid metabolism; fatty acid metabolism. Its function is as follows. Oxidase that catalyzes the oxidation of medium and long chain hydroxyacids such as 2-hydroxyhexadecanoate and 2-hydroxyoctanoate, to the correspondong 2-oxoacids. Its role in the oxidation of 2-hydroxy fatty acids may contribute to the general pathway of fatty acid alpha-oxidation. Active in vitro with the artificial electron acceptor 2,6-dichlorophenolindophenol (DCIP), but O2 is believed to be the physiological electron acceptor, leading to the production of H2O2. Is not active on glycolate, glyoxylate, L-lactate and 2-hydroxybutanoate. In Homo sapiens (Human), this protein is 2-Hydroxyacid oxidase 2 (HAO2).